The following is a 190-amino-acid chain: dCTP deaminase, dUMP-forming (190 aa).

Residues 101–106, Asp119, 127–129, Gln148, Tyr162, and Gln174 contribute to the dCTP site; these read KSSLGR and TLE. The Proton donor/acceptor role is filled by Glu129. Residues 161-190 are disordered; the sequence is PYGSSGVGSKYQGQRGPTPSRSYQNFIRST. Residues 171 to 190 are compositionally biased toward polar residues; it reads YQGQRGPTPSRSYQNFIRST.

It belongs to the dCTP deaminase family. In terms of assembly, homotrimer.

It catalyses the reaction dCTP + 2 H2O = dUMP + NH4(+) + diphosphate. It functions in the pathway pyrimidine metabolism; dUMP biosynthesis; dUMP from dCTP: step 1/1. Functionally, bifunctional enzyme that catalyzes both the deamination of dCTP to dUTP and the hydrolysis of dUTP to dUMP without releasing the toxic dUTP intermediate. The sequence is that of dCTP deaminase, dUMP-forming from Mycobacterium marinum (strain ATCC BAA-535 / M).